Consider the following 293-residue polypeptide: Nucleotide-binding protein LBA0691 (293 aa).

Position 13–20 (13–20 (GMSGAGKT)) interacts with ATP. 63-66 (DLRV) contacts GTP.

The protein belongs to the RapZ-like family.

Its function is as follows. Displays ATPase and GTPase activities. The protein is Nucleotide-binding protein LBA0691 of Lactobacillus acidophilus (strain ATCC 700396 / NCK56 / N2 / NCFM).